The sequence spans 616 residues: Chaperone protein HscA homolog (616 aa).

It belongs to the heat shock protein 70 family.

Chaperone involved in the maturation of iron-sulfur cluster-containing proteins. Has a low intrinsic ATPase activity which is markedly stimulated by HscB. This Vibrio atlanticus (strain LGP32) (Vibrio splendidus (strain Mel32)) protein is Chaperone protein HscA homolog.